Consider the following 117-residue polypeptide: Large ribosomal subunit protein bL17 (117 aa).

The protein belongs to the bacterial ribosomal protein bL17 family. Part of the 50S ribosomal subunit. Contacts protein L32.

The sequence is that of Large ribosomal subunit protein bL17 from Thermomicrobium roseum (strain ATCC 27502 / DSM 5159 / P-2).